The sequence spans 182 residues: Adenine phosphoribosyltransferase (182 aa).

Belongs to the purine/pyrimidine phosphoribosyltransferase family. In terms of assembly, homodimer.

The protein localises to the cytoplasm. It carries out the reaction AMP + diphosphate = 5-phospho-alpha-D-ribose 1-diphosphate + adenine. Its pathway is purine metabolism; AMP biosynthesis via salvage pathway; AMP from adenine: step 1/1. Functionally, catalyzes a salvage reaction resulting in the formation of AMP, that is energically less costly than de novo synthesis. This is Adenine phosphoribosyltransferase from Campylobacter hominis (strain ATCC BAA-381 / DSM 21671 / CCUG 45161 / LMG 19568 / NCTC 13146 / CH001A).